We begin with the raw amino-acid sequence, 192 residues long: Ion-translocating oxidoreductase complex subunit B (192 aa).

The hydrophobic stretch occupies residues 1–26; sequence MEMIVIAVVALTLLALLFGMLLGYAS. Residues 32 to 91 form the 4Fe-4S domain; that stretch reads EEDPVVDQVDELLPQSQCGQCGYPGCRPYAEAVANNGEQINRCVPGGEPVMQKIATLLNV. [4Fe-4S] cluster is bound by residues cysteine 49, cysteine 52, cysteine 57, cysteine 74, cysteine 117, cysteine 120, cysteine 123, cysteine 127, cysteine 147, cysteine 150, cysteine 153, and cysteine 157. 2 consecutive 4Fe-4S ferredoxin-type domains span residues 108–137 and 138–167; these read MLAV…GATR and AMHT…LRPA.

The protein belongs to the 4Fe4S bacterial-type ferredoxin family. RnfB subfamily. As to quaternary structure, the complex is composed of six subunits: RnfA, RnfB, RnfC, RnfD, RnfE and RnfG. The cofactor is [4Fe-4S] cluster.

It is found in the cell inner membrane. In terms of biological role, part of a membrane-bound complex that couples electron transfer with translocation of ions across the membrane. This Cronobacter sakazakii (strain ATCC BAA-894) (Enterobacter sakazakii) protein is Ion-translocating oxidoreductase complex subunit B.